The sequence spans 367 residues: Leucine-rich repeat-containing protein 28 (367 aa).

9 LRR repeats span residues 16-36 (KHKN…ELLK), 42-63 (HLER…LAQK), 66-87 (NLVE…IGSL), 89-111 (KLQC…GGLR), 112-133 (ALRH…VGDL), 135-156 (ELQT…LHLC), 158-180 (SLQY…CQLP), 181-202 (SLNE…LGRS), and 204-226 (ELQY…LYNK).

The polypeptide is Leucine-rich repeat-containing protein 28 (Lrrc28) (Mus musculus (Mouse)).